Here is a 227-residue protein sequence, read N- to C-terminus: MYELKEKSYPMQPRERLELLGEEYLSDVELLAILLRTGRKKYSSLNLALELLQHFGTLDNFRKASISELKEISGIGQTKAIELRAMIELGKRIQTTTRKRYGQVLSSKEYGMSLAFEMQNFEQEHLTATYLDGQNQIIEKKTIFIGAFNHATASPREILYHAVKNLSVGLLVAHNHPSGNLQPSQADKIFTKKIKNACDNIGINFIDHIIVGAGNYYSFRERDSNLF.

The MPN domain maps to 103-225; the sequence is QVLSSKEYGM…YYSFRERDSN (123 aa). Zn(2+) contacts are provided by His174, His176, and Asp187. The JAMM motif signature appears at 174-187; the sequence is HNHPSGNLQPSQAD.

It belongs to the UPF0758 family.

The protein is UPF0758 protein llmg_1515 of Lactococcus lactis subsp. cremoris (strain MG1363).